The following is a 318-amino-acid chain: Phospholipid scramblase 1 (318 aa).

Polar residues predominate over residues Met1–Glu14. The disordered stretch occupies residues Met1–Pro64. Residues Met1–Pro84 form a proline-rich domain (PRD) region. At Met1–Lys288 the chain is on the cytoplasmic side. Positions Pro18–Pro26 match the SH3-binding 1 motif. 2 short sequence motifs (PPXY motif) span residues Pro22 to Tyr25 and Pro33 to Tyr36. Positions Gln31 to Val44 are enriched in low complexity. The SH3-binding 2 signature appears at Pro42–Pro50. 2 positions are modified to phosphotyrosine; by ABL: Tyr69 and Tyr74. Positions Pro84–Pro92 match the SH3-binding 3 motif. An interaction with hepatitis C virus E2 glycoprotein region spans residues Leu99–Lys290. Thr161 carries the phosphothreonine; by PKC/PRKCD modification. 5 S-palmitoyl cysteine lipidation sites follow: Cys184, Cys185, Cys186, Cys188, and Cys189. Positions Gly257–Ile266 match the Nuclear localization signal motif. The chain crosses the membrane as a helical span at residues Met289–Phe305. At Glu306–Trp318 the chain is on the extracellular side.

This sequence belongs to the phospholipid scramblase family. In terms of assembly, forms homooligomers in the presence of calcium. Interacts with ABL. Interacts with RELT, RELL1 and RELL2. Interacts with OXSR1 in the presence of RELT. Interacts with TOP2A and TOP2B. Interacts with OCLN. Interacts with TRPC5. Interacts with TRPC1 and TRPC4. Interacts with ILDR1. (Microbial infection) Interacts with hepatitis C virus E1 and E2 glycoproteins. As to quaternary structure, (Microbial infection) Interacts with T-cell leukemia virus (HTLV)-1 protein Tax (via N-terminus); this interaction represses Tax homodimerization. In terms of assembly, (Microbial infection) Interacts with HIV-1 protein Tat; this interaction represses the Tat-dependent transactivation of the HIV-1 long terminal repeat (LTR) and reduces the nuclear translocation of Tat. (Microbial infection) Interacts with hepatitis B virus protein HBx; this interaction promotes the proteasomal degradation of HBx. As to quaternary structure, (Microbial infection) Interacts with human cytomegalovirus proteins IE1 and IE2. In terms of assembly, (Microbial infection) Interacts with Epstein Barr virus (EBV) lytic switch protein BZLF1; this interaction negatively regulates the transcriptional regulatory activity of BZLF1 by preventing the formation of the BZLF1-CBP complex. (Microbial infection) Interacts with influenza virus nucleoprotein NP. It depends on Ca(2+) as a cofactor. Mg(2+) is required as a cofactor. Zn(2+) serves as cofactor. Phosphorylation at Thr-161 by PKC/PKCD increases its phospholipid scramblase activity during both cell stimulation and apoptosis. Phosphorylated by OXSR1 in the presence of RELT. In terms of processing, palmitoylation is required for its phospholipid scramblase activity. Palmitoylation regulates its localization to the cell membrane or the nucleus; trafficking to the cell membrane is dependent upon palmitoylation whereas in the absence of palmitoylation, localizes to the nucleus. In terms of tissue distribution, expressed in platelets, erythrocyte membranes, lymphocytes, spleen, thymus, prostate, testis, uterus, intestine, colon, heart, placenta, lung, liver, kidney and pancreas. Not detected in brain and skeletal muscle.

The protein resides in the cell membrane. It localises to the nucleus. It is found in the cytoplasm. Its subcellular location is the perinuclear region. It carries out the reaction a 1,2-diacyl-sn-glycero-3-phosphocholine(in) = a 1,2-diacyl-sn-glycero-3-phosphocholine(out). It catalyses the reaction a 1,2-diacyl-sn-glycero-3-phosphoethanolamine(in) = a 1,2-diacyl-sn-glycero-3-phosphoethanolamine(out). The catalysed reaction is a 1,2-diacyl-sn-glycero-3-phospho-L-serine(in) = a 1,2-diacyl-sn-glycero-3-phospho-L-serine(out). Its activity is regulated as follows. Activated by Pb(2+) and Hg(2+) ions. Phosphorylation at Thr-161 by PKC/PKCD increases its phospholipid scramblase activity during both cell stimulation and apoptosis. Catalyzes calcium-induced ATP-independent rapid bidirectional and non-specific movement of phospholipids (lipid scrambling or lipid flip-flop) between the inner and outer leaflet of the plasma membrane resulting in collapse of the phospholipid asymmetry which leads to phosphatidylserine externalization on the cell surface. Mediates calcium-dependent phosphatidylserine externalization and apoptosis in neurons via its association with TRPC5. Also exhibits magnesium-dependent nuclease activity against double-stranded DNA and RNA but not single-stranded DNA and can enhance DNA decatenation mediated by TOP2A. Negatively regulates FcR-mediated phagocytosis in differentiated macrophages. May contribute to cytokine-regulated cell proliferation and differentiation. May play a role in the antiviral response of interferon (IFN) by amplifying and enhancing the IFN response through increased expression of select subset of potent antiviral genes. Inhibits the functions of viral transactivators, including human T-cell leukemia virus (HTLV)-1 protein Tax, human immunodeficiency virus (HIV)-1 Tat, human hepatitis B virus (HBV) HBx, Epstein-Barr virus (EBV) BZLF1 and human cytomegalovirus IE1 and IE2 proteins through direct interactions. Also mediates the inhibition of influenza virus infection by preventing nuclear import of the viral nucleoprotein/NP. Plays a crucial role as a defense factor against SARS-CoV-2 independently of its scramblase activity by directly targeting nascent viral vesicles to prevent virus-membrane fusion and the release of viral RNA into the host-cell cytosol. In terms of biological role, (Microbial infection) Acts as an attachment receptor for HCV. The sequence is that of Phospholipid scramblase 1 (PLSCR1) from Homo sapiens (Human).